The chain runs to 906 residues: Translation initiation factor IF-2 (906 aa).

Disordered stretches follow at residues 134–250 (RQRN…GSHV) and 269–317 (HLSA…FERP). Basic and acidic residues predominate over residues 136–177 (RNLDEQQRLAESDRVRDEEIQRKRDEEQAAKDRAEAERKAAE). Low complexity-rich tracts occupy residues 178–232 (EAAA…STPA) and 287–305 (GRPG…RGSN). The tr-type G domain maps to 405-574 (TRPPVVTIMG…SLQAEVLELK (170 aa)). A G1 region spans residues 414 to 421 (GHVDHGKT). 414–421 (GHVDHGKT) serves as a coordination point for GTP. The interval 439-443 (GITQH) is G2. The tract at residues 460-463 (DTPG) is G3. GTP contacts are provided by residues 460 to 464 (DTPGH) and 514 to 517 (NKID). Residues 514 to 517 (NKID) form a G4 region. A G5 region spans residues 550 to 552 (SAK).

Belongs to the TRAFAC class translation factor GTPase superfamily. Classic translation factor GTPase family. IF-2 subfamily.

Its subcellular location is the cytoplasm. Its function is as follows. One of the essential components for the initiation of protein synthesis. Protects formylmethionyl-tRNA from spontaneous hydrolysis and promotes its binding to the 30S ribosomal subunits. Also involved in the hydrolysis of GTP during the formation of the 70S ribosomal complex. This Xanthomonas oryzae pv. oryzae (strain MAFF 311018) protein is Translation initiation factor IF-2.